The sequence spans 772 residues: Ribosomal protein S6 kinase alpha-4 (772 aa).

One can recognise a Protein kinase 1 domain in the interval 33-301 (FELLKVLGTG…AQEVRNHPFF (269 aa)). ATP is bound by residues 39 to 47 (LGTGAYGKV) and Lys65. Asp161 functions as the Proton acceptor in the catalytic mechanism. Ser196 is modified (phosphoserine; by autocatalysis). One can recognise an AGC-kinase C-terminal domain in the interval 302 to 371 (QGLDWVALAA…VAPSILFDHN (70 aa)). The residue at position 343 (Ser343) is a Phosphoserine; by MAPK1, MAPK3 and MAPK14. Ser347 carries the phosphoserine modification. Phosphoserine; by autocatalysis occurs at positions 360 and 365. A Protein kinase 2 domain is found at 411–674 (DLREPALGQG…LEGLRGSSWL (264 aa)). Residues 417–425 (LGQGSFSVC) and Lys440 contribute to the ATP site. Catalysis depends on Asp530, which acts as the Proton acceptor. Thr542 carries the phosphothreonine modification. Thr568 carries the phosphothreonine; by MAPK1, MAPK3 and MAPK14 modification. Phosphoserine occurs at positions 634 and 678. Disordered regions lie at residues 673–696 (WLQDGSARSSPPLRTPDVLESSGP) and 728–772 (AKRR…LPPS). Thr687 carries the phosphothreonine modification. The interval 725–772 (APLAKRRKQKLRSATASRRGSPAPANPGRAPVASKGAPRRANGPLPPS) is required for nuclear targeting and association with MAPK14. Ser737 bears the Phosphoserine; by autocatalysis mark. Ser745 carries the post-translational modification Phosphoserine.

This sequence belongs to the protein kinase superfamily. AGC Ser/Thr protein kinase family. S6 kinase subfamily. As to quaternary structure, forms a complex with either MAPK1/ERK2 or MAPK3/ERK1 in quiescent cells which transiently dissociates following mitogenic stimulation. Also associates with MAPK14/p38-alpha. Activated RPS6KA4 associates with and phosphorylates the NF-kappa-B p65 subunit RELA. The cofactor is Mg(2+). Ser-343 and Thr-568 phosphorylation is required for kinase activity. Ser-343 and Ser-196 are autophosphorylated by the C-terminal kinase domain, and their phosphorylation is essential for the catalytic activity of the N-terminal kinase domain. Phosphorylated at Ser-343, Thr-568 and Thr-687 by MAPK1/ERK2, MAPK3/ERK1 and MAPK14/p38-alpha. Autophosphorylated at Ser-737 and Ser-745 by the N-terminal kinase domain.

It is found in the nucleus. It catalyses the reaction L-seryl-[protein] + ATP = O-phospho-L-seryl-[protein] + ADP + H(+). The enzyme catalyses L-threonyl-[protein] + ATP = O-phospho-L-threonyl-[protein] + ADP + H(+). Activated by phosphorylation at Ser-343, Thr-568 and Thr-687 by MAPK1/ERK2, MAPK3/ERK1 and MAPK14/p38-alpha, and by further autophosphorylation of Ser-196, Ser-360 and Ser-365 by the activated C-terminal kinase domain. In terms of biological role, serine/threonine-protein kinase that is required for the mitogen or stress-induced phosphorylation of the transcription factors CREB1 and ATF1 and for the regulation of the transcription factor RELA, and that contributes to gene activation by histone phosphorylation and functions in the regulation of inflammatory genes. Phosphorylates CREB1 and ATF1 in response to mitogenic or stress stimuli such as UV-C irradiation, epidermal growth factor (EGF) and anisomycin. Plays an essential role in the control of RELA transcriptional activity in response to TNF. Phosphorylates 'Ser-10' of histone H3 in response to mitogenics, stress stimuli and EGF, which results in the transcriptional activation of several immediate early genes, including proto-oncogenes c-fos/FOS and c-jun/JUN. May also phosphorylate 'Ser-28' of histone H3. Mediates the mitogen- and stress-induced phosphorylation of high mobility group protein 1 (HMGN1/HMG14). In lipopolysaccharide-stimulated primary macrophages, acts downstream of the Toll-like receptor TLR4 to limit the production of pro-inflammatory cytokines. Functions probably by inducing transcription of the MAP kinase phosphatase DUSP1 and the anti-inflammatory cytokine interleukin 10 (IL10), via CREB1 and ATF1 transcription factors. The protein is Ribosomal protein S6 kinase alpha-4 (RPS6KA4) of Homo sapiens (Human).